A 341-amino-acid polypeptide reads, in one-letter code: MNRKVLKVIDGETVFPPPIWMMRQAGRYLPEYRETRKKAGSFLDLCYSPDLAVEVTLQPIRRFGFDAAILFSDILVVPHALGRDLRFEEGKGPLMTPIDADEIFWLETEGVAKRLEPVYETVRLVREQLPDETTLLGFCGAPWTVATYMIAGHGTPDQAPARLFAYRFPEAFEKLLNDLADVSAEYLIEQLGAGADAVQIFDSWSGVLDEDCFERFCIRLVARIVQKVRAVYPQARIIGFPKGAGMLYAGYREKTGVDMLGLDWSVPLSFAALLQEEGAVQGNLDPLRVVAGGNALDEGVDAILERMGQGPLVFNLGHGITPQAPIENVQRMIDRVRGGKS.

Substrate contacts are provided by residues 23 to 27 (RQAGR), aspartate 73, tyrosine 148, serine 203, and histidine 318.

Belongs to the uroporphyrinogen decarboxylase family. As to quaternary structure, homodimer.

The protein localises to the cytoplasm. The enzyme catalyses uroporphyrinogen III + 4 H(+) = coproporphyrinogen III + 4 CO2. It participates in porphyrin-containing compound metabolism; protoporphyrin-IX biosynthesis; coproporphyrinogen-III from 5-aminolevulinate: step 4/4. Its function is as follows. Catalyzes the decarboxylation of four acetate groups of uroporphyrinogen-III to yield coproporphyrinogen-III. The chain is Uroporphyrinogen decarboxylase from Brucella ovis (strain ATCC 25840 / 63/290 / NCTC 10512).